The chain runs to 156 residues: Small ribosomal subunit protein uS7 (156 aa).

This sequence belongs to the universal ribosomal protein uS7 family. As to quaternary structure, part of the 30S ribosomal subunit. Contacts proteins S9 and S11.

Its function is as follows. One of the primary rRNA binding proteins, it binds directly to 16S rRNA where it nucleates assembly of the head domain of the 30S subunit. Is located at the subunit interface close to the decoding center, probably blocks exit of the E-site tRNA. The polypeptide is Small ribosomal subunit protein uS7 (Vibrio atlanticus (strain LGP32) (Vibrio splendidus (strain Mel32))).